Consider the following 381-residue polypeptide: ELMO domain-containing protein 3 (381 aa).

The segment covering 1-17 (MNENFHSFHEKELRDGQ) has biased composition (basic and acidic residues). Positions 1–31 (MNENFHSFHEKELRDGQVESVSAGSSPPCDK) are disordered. Positions 170-324 (MHGRVLQTIY…DLEMSAKKSP (155 aa)) constitute an ELMO domain.

The protein localises to the cell projection. The protein resides in the stereocilium. It is found in the kinocilium. Its subcellular location is the cytoplasm. It localises to the cytoskeleton. Functionally, acts as a GTPase-activating protein (GAP) for ARL2 with low specific activity. In Bos taurus (Bovine), this protein is ELMO domain-containing protein 3 (ELMOD3).